Consider the following 150-residue polypeptide: MRVLVLHGPNLNLLGRRETGIYGNETLADIDARLQELASELGVDLECFQSNSEAALIERLHGAPGTVDAVVFNPAGFTHYSIALRDAVAAVGLPVVEVHLTNIHAREEFRHRSVIAPVAAGQISGFGTAGYLLGLRAAVELVSRGKMSRA.

Residue Y22 is the Proton acceptor of the active site. Residues N73, H79, and D86 each coordinate substrate. The active-site Proton donor is the H99. Substrate contacts are provided by residues 100 to 101 (LT) and R110.

It belongs to the type-II 3-dehydroquinase family. Homododecamer.

The enzyme catalyses 3-dehydroquinate = 3-dehydroshikimate + H2O. The protein operates within metabolic intermediate biosynthesis; chorismate biosynthesis; chorismate from D-erythrose 4-phosphate and phosphoenolpyruvate: step 3/7. Functionally, catalyzes a trans-dehydration via an enolate intermediate. This chain is 3-dehydroquinate dehydratase, found in Desulforudis audaxviator (strain MP104C).